We begin with the raw amino-acid sequence, 145 residues long: Phosphoribosyl-AMP cyclohydrolase (145 aa).

Residue Asp-87 coordinates Mg(2+). Zn(2+) is bound at residue Cys-88. Positions 89 and 91 each coordinate Mg(2+). Zn(2+)-binding residues include Cys-104 and Cys-111.

It belongs to the PRA-CH family. In terms of assembly, homodimer. It depends on Mg(2+) as a cofactor. Zn(2+) is required as a cofactor.

It localises to the cytoplasm. It carries out the reaction 1-(5-phospho-beta-D-ribosyl)-5'-AMP + H2O = 1-(5-phospho-beta-D-ribosyl)-5-[(5-phospho-beta-D-ribosylamino)methylideneamino]imidazole-4-carboxamide. Its pathway is amino-acid biosynthesis; L-histidine biosynthesis; L-histidine from 5-phospho-alpha-D-ribose 1-diphosphate: step 3/9. Functionally, catalyzes the hydrolysis of the adenine ring of phosphoribosyl-AMP. The sequence is that of Phosphoribosyl-AMP cyclohydrolase from Nitrobacter winogradskyi (strain ATCC 25391 / DSM 10237 / CIP 104748 / NCIMB 11846 / Nb-255).